The primary structure comprises 180 residues: MSRQAGRGTESKKMNSELFTLTYGALVTQLCKDYENDEDVNKQLDKMGYNIGVRLIEDFLARSNVGRCHDFRETADVIAKIAFKMYLGITPSITNWSPGGDEFSLILENNPLVDFVELPDNHSSLIYSNLLCGVLRGALEMVQMAVDVKFVQDTLKGDSVTEIRMKFIRRIEDNLPAGEE.

The S-palmitoyl cysteine moiety is linked to residue C68.

It belongs to the TRAPP small subunits family. BET3 subfamily. In terms of assembly, homodimer. Part of the multisubunit TRAPP (transport protein particle) complex.

The protein resides in the golgi apparatus. Its subcellular location is the cis-Golgi network. It is found in the endoplasmic reticulum. In terms of biological role, may play a role in vesicular transport from endoplasmic reticulum to Golgi. This chain is Trafficking protein particle complex subunit 3 (TRAPPC3), found in Gallus gallus (Chicken).